The chain runs to 282 residues: (4-alkanoyl-5-oxo-2,5-dihydrofuran-3-yl)methyl phosphate reductase (282 aa).

6–11 (GATGAV) is an NADP(+) binding site.

This sequence belongs to the NmrA-type oxidoreductase family.

It catalyses the reaction a [(3S,4R)-4-alkanoyl-5-oxooxolan-3-yl]methyl phosphate + NADP(+) = a (4-alkanoyl-5-oxo-2,5-dihydrofuran-3-yl)methyl phosphate + NADPH + H(+). The catalysed reaction is [(3S,4R)-4-(6-methylheptanoyl)-5-oxooxolan-3-yl]methyl phosphate + NADP(+) = [4-(6-methylheptanoyl)-5-oxo-2H-furan-3-yl]methyl phosphate + NADPH + H(+). Its function is as follows. Involved in the biosynthesis of A factor (2-isocapryloyl-3R-hydroxymethyl-gamma-butyrolactone), a gamma-butyrolactone autoregulator that triggers secondary metabolism and morphogenesis in Streptomyces. Catalyzes the reduction of the butenolide phosphate produced by nonenzymatic intramolecular condensation of the 8-methyl-3-oxononanoyl-DHAP ester. The protein is (4-alkanoyl-5-oxo-2,5-dihydrofuran-3-yl)methyl phosphate reductase of Streptomyces griseus subsp. griseus (strain JCM 4626 / CBS 651.72 / NBRC 13350 / KCC S-0626 / ISP 5235).